A 432-amino-acid chain; its full sequence is Mannose-6-phosphate isomerase 1 (432 aa).

M1 carries the N-acetylmethionine modification. The Zn(2+) site is built by Q124, H126, E151, and H288. The active site involves R307.

The protein belongs to the mannose-6-phosphate isomerase type 1 family. It depends on Zn(2+) as a cofactor. In terms of tissue distribution, constitutively expressed in both vegetative and reproductive organs under normal growth conditions (at protein level).

It catalyses the reaction D-mannose 6-phosphate = D-fructose 6-phosphate. It participates in nucleotide-sugar biosynthesis; GDP-alpha-D-mannose biosynthesis; alpha-D-mannose 1-phosphate from D-fructose 6-phosphate: step 1/2. With respect to regulation, inhibited by EDTA, Zn(2+), Cd(2+), Co(2+), p-chloromercuribenzoate and L-ascorbic acid (AsA). Functionally, phosphomannose isomerase involved in the synthesis of the GDP-mannose and dolichol-phosphate-mannose required for a number of critical mannosyl transfer reactions. Involved in the ascorbic acid (AsA) biosynthesis. Required during the endosperm development. The polypeptide is Mannose-6-phosphate isomerase 1 (PMI1) (Arabidopsis thaliana (Mouse-ear cress)).